Here is a 118-residue protein sequence, read N- to C-terminus: Beta-2-microglobulin (118 aa).

The first 21 residues, M1–A21, serve as a signal peptide directing secretion. Positions P26–K113 constitute an Ig-like C1-type domain. The cysteines at positions 46 and 101 are disulfide-linked.

The protein belongs to the beta-2-microglobulin family. As to quaternary structure, heterodimer of an alpha chain and a beta chain. Beta-2-microglobulin is the beta-chain of major histocompatibility complex class I molecules.

The protein localises to the secreted. Functionally, component of the class I major histocompatibility complex (MHC). Involved in the presentation of peptide antigens to the immune system. The protein is Beta-2-microglobulin (B2M) of Tachyglossus aculeatus aculeatus (Southeast Australian short-beaked echidna).